Here is a 73-residue protein sequence, read N- to C-terminus: Antimicrobial peptide TsAP-1 (73 aa).

The first 22 residues, 1 to 22, serve as a signal peptide directing secretion; the sequence is MQIKHLITLFFLVLIVADQCSA. Lys39 bears the Lysine amide mark. A propeptide spanning residues 45–73 is cleaved from the precursor; sequence EISAQIEQYKDLQKREAELEELLDRLPMY.

Expressed by the venom gland.

The protein localises to the secreted. In terms of biological role, has a low antimicrobial activity against S.aureus, E.coli, and C.albicans (MICs 120-160 uM). Has a low hemolytic activity (4% at 160 uM). Also inhibits the growth of two cancer cell lines on a total of five (the squamous carcinoma cell line H157 (IC(50)=55.9 uM) and the lung adenocarcinoma cell line H838 (IC(50)=52.5 uM)). The sequence is that of Antimicrobial peptide TsAP-1 from Tityus serrulatus (Brazilian scorpion).